We begin with the raw amino-acid sequence, 361 residues long: MKKTLAALIVGAFAASAANAAVVYNNEGTNVELGGRLSVIAEQSNSTRKDQKQQHGELRNAGSHFHIKATHNFGDGFYAQGYLETRLVSDYQSSSDNFGNIITKYAYVTLGNKGFGEVKLGRAKTIADGITSAEDKEYGVLENKEYIPKDGNSVGYTFKGIDGLVLGANYLLAQKREAYKTDAATPGEVIAQAISNGVQVGAKYDANNIIAGIAYGRTNYREDLAELGNKSGKKQQVNGALSTLGYRFSDLGLLVSLDSGYAKTKNYKDKHEKRYFVSPGFQYELMEDTNVYGNFKYERNSVDQGKKAREHAVLFGVDHKLHKQVLTYIEGAYARTRTNDKDKTEKTEKEKSVGVGLRVYF.

An N-terminal signal peptide occupies residues 1–20 (MKKTLAALIVGAFAASAANA).

Belongs to the Gram-negative porin family. In terms of assembly, homotrimer.

It is found in the cell outer membrane. Forms pores that allow passive diffusion of small molecules across the outer membrane. This Haemophilus influenzae protein is Outer membrane protein P2 (ompP2).